The following is a 334-amino-acid chain: YbbR-like domain-containing protein BB_0009 (334 aa).

Residues 22-38 (AISILIAILMFVAFNFN) form a helical membrane-spanning segment. YbbR-like domains follow at residues 43–128 (ITTE…NVLL) and 138–220 (VKIE…VVNI).

The protein resides in the membrane. The protein is YbbR-like domain-containing protein BB_0009 of Borreliella burgdorferi (strain ATCC 35210 / DSM 4680 / CIP 102532 / B31) (Borrelia burgdorferi).